The following is a 744-amino-acid chain: 4'-phospho-dehydrooxetanocin synthase (744 aa).

One can recognise a B12-binding domain in the interval 119–259 (TVTLVNLCVI…KMLKKELKLD (141 aa)). Residues arginine 135, serine 139, serine 184, glycine 241, glutamate 242, and glutamate 308 each coordinate cob(II)alamin. Residues 299–545 (SKFRGALTLE…IVSYMLASME (247 aa)) enclose the Radical SAM core domain. [4Fe-4S] cluster is bound by residues cysteine 313, cysteine 318, and cysteine 321. Proline 322, histidine 325, lysine 326, alanine 361, and glutamate 363 together coordinate cob(II)alamin. S-adenosyl-L-methionine-binding residues include glutamate 436 and glutamate 545.

It belongs to the radical SAM superfamily. The cofactor is [4Fe-4S] cluster. Cob(II)alamin serves as cofactor.

It catalyses the reaction dAMP + S-adenosyl-L-methionine = 4'-phospho-dehydrooxetanocin + 5'-deoxyadenosine + L-methionine + H(+). The catalysed reaction is AH2 + 2 S-adenosyl-L-methionine = 2 5'-deoxyadenosin-5'-yl radical + 2 L-methionine + A + 2 H(+). It carries out the reaction 2 5'-deoxyadenosin-5'-yl radical + 2 dAMP + A = 2 4'-phospho-dehydrooxetanocin + 2 5'-deoxyadenosine + AH2. Its activity is regulated as follows. Requires OxsA for the oxidative ring contraction activity. Activation of OxsB requires its direct interaction with OxsA and is independent of OxsA phosphohydrolase activity. In contrast to ring contraction, methylation does not require the presence of OxsA. In terms of biological role, isomerase involved in the biosynthesis of oxetanocin A (OXT-A), a nucleoside analog with antitumor, antiviral and antibacterial properties. Catalyzes an oxidative ring contraction of dAMP, forming an oxetane aldehyde. In addition, shows methyltransferase activity in vitro and is able to catalyze the radical mediated, stereoselective C2'-methylation of dAMP to form methylated 2'-dAMP. Also catalyzes the demethylation of S-adenosyl-L-methionine (SAM) to S-adenosyl-L-homocysteine (SAH). The polypeptide is 4'-phospho-dehydrooxetanocin synthase (Priestia megaterium (Bacillus megaterium)).